The primary structure comprises 236 residues: MTRRYWNIHLEEMMEAGVHFGHGTRKWNPRMAPYISAKRKGIHITNLTRTARFLSEACDLVFDAASRGKNFLLVGTKNKAADSVASAAIRARCHYVNKKWLGGMLTNWSTTETRLHKFRDLRAEQKTGKLNRLPKRDAAMLKRQLSHLQTYLGGIKYMTGLPDIVIIVDQQEEYTALRECLTLGIPTICLIDTNCDPDLADISIPANDDAIASIRLILNKLVSAICEGRSSSIRNR.

It belongs to the universal ribosomal protein uS2 family.

Its subcellular location is the plastid. The protein resides in the chloroplast. The polypeptide is Small ribosomal subunit protein uS2c (rps2) (Liriodendron tulipifera (Tuliptree)).